The primary structure comprises 199 residues: Mediator of RNA polymerase II transcription subunit 10 (199 aa).

It belongs to the Mediator complex subunit 10 family. Component of the Mediator complex.

Its subcellular location is the nucleus. Component of the Mediator complex, a coactivator involved in the regulated transcription of nearly all RNA polymerase II-dependent genes. Mediator functions as a bridge to convey information from gene-specific regulatory proteins to the basal RNA polymerase II transcription machinery. Mediator is recruited to promoters by direct interactions with regulatory proteins and serves as a scaffold for the assembly of a functional preinitiation complex with RNA polymerase II and the general transcription factors. In Candida glabrata (strain ATCC 2001 / BCRC 20586 / JCM 3761 / NBRC 0622 / NRRL Y-65 / CBS 138) (Yeast), this protein is Mediator of RNA polymerase II transcription subunit 10 (NUT2).